The following is a 587-amino-acid chain: Putative phagocytic receptor 1b (587 aa).

The signal sequence occupies residues 1–23 (MRLQILLIYLICIIVSSIVLVES). Helical transmembrane passes span 223–243 (LSVMNSFFLVVLLTAFLAIMI), 294–314 (IGWQFISIVCGILALSLFGMF), 319–339 (GGNMYTAGIVLYALTSGISGY), 354–374 (AWNIVLTATLFVAPLFIVVIL), 390–410 (ILTMIEVITIWLFVGFPLTVV), 448–468 (ILIAGFLPFSAIYIELFYIFN), 480–500 (GILCLVFLILINVTVCITVAL), 524–544 (VVFIYMYSIYYYYYISHMYGL), and 556–576 (IVCFFFFILLGTVGFYSSLIF).

The protein belongs to the nonaspanin (TM9SF) (TC 9.A.2) family.

The protein localises to the membrane. Functionally, involved in adhesion and phagocytosis of hydrophilic particles. The protein is Putative phagocytic receptor 1b (phg1b) of Dictyostelium discoideum (Social amoeba).